A 129-amino-acid chain; its full sequence is Small ribosomal subunit protein uS12 (129 aa).

Positions 110–129 (RKQGRSRYGAHRKQVAATKK) are disordered.

This sequence belongs to the universal ribosomal protein uS12 family. In terms of assembly, part of the 30S ribosomal subunit. Contacts proteins S8 and S17. May interact with IF1 in the 30S initiation complex.

Its function is as follows. With S4 and S5 plays an important role in translational accuracy. Functionally, interacts with and stabilizes bases of the 16S rRNA that are involved in tRNA selection in the A site and with the mRNA backbone. Located at the interface of the 30S and 50S subunits, it traverses the body of the 30S subunit contacting proteins on the other side and probably holding the rRNA structure together. The combined cluster of proteins S8, S12 and S17 appears to hold together the shoulder and platform of the 30S subunit. The protein is Small ribosomal subunit protein uS12 of Rickettsia prowazekii (strain Madrid E).